Consider the following 98-residue polypeptide: Large ribosomal subunit protein uL23 (98 aa).

It belongs to the universal ribosomal protein uL23 family. Part of the 50S ribosomal subunit. Contacts protein L29, and trigger factor when it is bound to the ribosome.

Functionally, one of the early assembly proteins it binds 23S rRNA. One of the proteins that surrounds the polypeptide exit tunnel on the outside of the ribosome. Forms the main docking site for trigger factor binding to the ribosome. This Chromohalobacter salexigens (strain ATCC BAA-138 / DSM 3043 / CIP 106854 / NCIMB 13768 / 1H11) protein is Large ribosomal subunit protein uL23.